We begin with the raw amino-acid sequence, 255 residues long: MMHDDPNEAGLPPDDAALPDEAADGADEVNPLHHRRIRSFVTRAGRVSTGQRRAIDELGPRFVVPYAPTLPDWDAVFGRSAPRILEIGFGMGASTAEIAAHRPGDDFLGVEVHEPGVGALLKLIGEQGLTNIRIIQHDAVEVLEHMLAPESLDGVHIFFPDPWHKARHHKRRLIQPPLVAQLAARLKPGAYLHCATDWQNYAEQMLEVLSAEPTLENTAADYAPRPDYRPVTKFERRGLRLGHGVWDLVFRKRAA.

The tract at residues M1–N30 is disordered. Residues A17–D27 are compositionally biased toward acidic residues. S-adenosyl-L-methionine contacts are provided by E86, E111, D138, and D161. Residue D161 is part of the active site. Residues K165, D197, and T232–E235 contribute to the substrate site.

The protein belongs to the class I-like SAM-binding methyltransferase superfamily. TrmB family.

The enzyme catalyses guanosine(46) in tRNA + S-adenosyl-L-methionine = N(7)-methylguanosine(46) in tRNA + S-adenosyl-L-homocysteine. It participates in tRNA modification; N(7)-methylguanine-tRNA biosynthesis. Its function is as follows. Catalyzes the formation of N(7)-methylguanine at position 46 (m7G46) in tRNA. The chain is tRNA (guanine-N(7)-)-methyltransferase from Burkholderia vietnamiensis (strain G4 / LMG 22486) (Burkholderia cepacia (strain R1808)).